The primary structure comprises 62 residues: Short neurotoxin C (62 aa).

A compositionally biased stretch (polar residues) spans 1–16; sequence RRCFNQQSSQPQTNKS. The tract at residues 1 to 22 is disordered; it reads RRCFNQQSSQPQTNKSCPPGEN. 4 cysteine pairs are disulfide-bonded: Cys3–Cys24, Cys17–Cys41, Cys43–Cys54, and Cys55–Cys60.

The protein belongs to the three-finger toxin family. Short-chain subfamily. Type I alpha-neurotoxin sub-subfamily. Expressed by the venom gland.

Its subcellular location is the secreted. Binds to muscle nicotinic acetylcholine receptor (nAChR) and inhibit acetylcholine from binding to the receptor, thereby impairing neuromuscular transmission. The chain is Short neurotoxin C from Laticauda laticaudata (Blue-ringed sea krait).